Here is an 88-residue protein sequence, read N- to C-terminus: Small ribosomal subunit protein uS17 (88 aa).

This sequence belongs to the universal ribosomal protein uS17 family. As to quaternary structure, part of the 30S ribosomal subunit.

Functionally, one of the primary rRNA binding proteins, it binds specifically to the 5'-end of 16S ribosomal RNA. The protein is Small ribosomal subunit protein uS17 of Pseudomonas savastanoi pv. phaseolicola (strain 1448A / Race 6) (Pseudomonas syringae pv. phaseolicola (strain 1448A / Race 6)).